The following is a 266-amino-acid chain: NADP-dependent mannitol dehydrogenase (266 aa).

Positions 107 and 140 each coordinate NADP(+). The active-site Proton donor is the Ser159. The NADP(+) site is built by Tyr174, Lys178, Ile206, and Thr208. Tyr174 acts as the Proton acceptor in catalysis. Lys178 (lowers pKa of active site Tyr) is an active-site residue.

The protein belongs to the short-chain dehydrogenases/reductases (SDR) family. As to quaternary structure, homotetramer.

The enzyme catalyses D-mannitol + NADP(+) = D-fructose + NADPH + H(+). Catalyzes the interconversion between D-mannitol and D-fructose. Plays a key role in liamocins biosynthesis by providing the mannitol moity that is linked to 3,5-dihydroxydecanoic acid (provided by the HR-PKS PKS1) via ester bond formation catalyzed by the esterase EST1. In Aureobasidium melanogenum (Aureobasidium pullulans var. melanogenum), this protein is NADP-dependent mannitol dehydrogenase.